We begin with the raw amino-acid sequence, 714 residues long: Probable serine/threonine-protein kinase mkcB (714 aa).

Positions 1 to 12 are enriched in basic residues; sequence MKSILKKAKHFF. Disordered regions lie at residues 1-267 and 281-349; these read MKSI…SSTS and GSGS…EQKP. Residues 23–35 show a composition bias toward basic and acidic residues; it reads GGEKTAKESESQQ. Residues 62–83 show a composition bias toward low complexity; it reads SQSQPTTSALQTSTSLQPSSSL. Residues 84-94 are compositionally biased toward polar residues; it reads HQIPQSQSSLE. 2 stretches are compositionally biased toward low complexity: residues 95–111 and 120–166; these read LTTNPTQQLPTTPTKQL and PHSQ…TLTT. Over residues 167 to 177 the composition is skewed to polar residues; the sequence is PVPSSENLATL. 2 stretches are compositionally biased toward low complexity: residues 178–241 and 254–267; these read STST…QEQT and LSQSTTSSSTSSTS. Polar residues predominate over residues 282 to 294; it reads SGSTKNKDSSSAP. Low complexity-rich tracts occupy residues 300 to 314 and 324 to 337; these read NNNNNTVSSSNKNRS and NNNNNNQNNHKNNN. Residues 438 to 687 enclose the Protein kinase domain; the sequence is YKDSDQVGKG…AEELLKHPFI (250 aa). ATP-binding positions include 444 to 452 and Lys467; that span reads VGKGGFGTV. Asp558 acts as the Proton acceptor in catalysis.

It belongs to the protein kinase superfamily. STE Ser/Thr protein kinase family. STE20 subfamily. The cofactor is Mg(2+). In terms of tissue distribution, expressed at equal levels in prestalk and prespore cells.

It carries out the reaction L-seryl-[protein] + ATP = O-phospho-L-seryl-[protein] + ADP + H(+). The enzyme catalyses L-threonyl-[protein] + ATP = O-phospho-L-threonyl-[protein] + ADP + H(+). The chain is Probable serine/threonine-protein kinase mkcB from Dictyostelium discoideum (Social amoeba).